We begin with the raw amino-acid sequence, 127 residues long: Prophage antitermination protein Q homolog QuuD (127 aa).

This sequence belongs to the phage antitermination Q type 1 family.

Functionally, positively regulate expression of some phage genes. Bacterial host RNA polymerase modified by antitermination proteins transcribes through termination sites that otherwise prevent expression of the regulated genes. This Escherichia coli (strain K12) protein is Prophage antitermination protein Q homolog QuuD (quuD).